The primary structure comprises 305 residues: Taste receptor type 2 member 136 (305 aa).

The Extracellular segment spans residues 1–9 (MMSFLVSIA). Residues 10–30 (SIAMLVKIVLGTFANVFIVLV) form a helical membrane-spanning segment. The Cytoplasmic portion of the chain corresponds to 31 to 46 (NFTDCIKKRKFLLADR). The chain crosses the membrane as a helical span at residues 47–67 (ILTVLAIFRFDLLWIILMNWS). At 68–69 (SS) the chain is on the extracellular side. The helical transmembrane segment at 70–90 (VFHVGLYFQVRFCICVVWIVT) threads the bilayer. Over 91-99 (NHFNTWLAN) the chain is Cytoplasmic. A helical membrane pass occupies residues 100–120 (ILSILYLLKIDNFSNLIFLGL). Residues 121-127 (KGKIKCP) lie on the Extracellular side of the membrane. A helical transmembrane segment spans residues 128 to 148 (YIVLLPCFVLLFPNLIMVTIC). Residues 149–176 (ETTQANGHQGNLTGKTKLTYFTNLIAMT) are Cytoplasmic-facing. Residues 177-197 (FTLGSLVPFTTFMICFLLLIC) form a helical membrane-spanning segment. Over 198–223 (SLCKHLRTMRLYGKGSQGPSASTHIK) the chain is Extracellular. The chain crosses the membrane as a helical span at residues 224–244 (VLQVLISFLLLFSMFILLLII). The Cytoplasmic segment spans residues 245–305 (SDYNYTKSLE…ARFWLKEKKP (61 aa)).

The protein belongs to the G-protein coupled receptor T2R family.

Its subcellular location is the membrane. In terms of biological role, putative taste receptor which may play a role in the perception of bitterness. The chain is Taste receptor type 2 member 136 (Tas2r136) from Mus musculus (Mouse).